Consider the following 351-residue polypeptide: Divinyl chlorophyll a/b light-harvesting protein PcbA (351 aa).

Transmembrane regions (helical) follow at residues 27–47 (FIAAHAAHTGLIAFWAGAFTL), 64–84 (LIALPHLATLGIGFDEAGTFV), 89–109 (VTAIAIVHLVLSMVYGAGGLL), 202–222 (VMGGHAFLAFFMITGGAFHIA), 242–262 (AILSWSLAGIGWMAIVAAFWC), and 305–325 (LTNVHYFLGFFYIQGHLWHAL).

Belongs to the PsbB/PsbC family. IsiA/Pcb subfamily. In terms of assembly, the antenna complex consists of divinyl chlorophylls (a and b) and divinyl chlorophyll a/b binding proteins and binds more divinyl chlorophyll b than does the antenna complex from high-light-adapted Prochlorococcus. The cofactor is divinyl chlorophyll a. It depends on divinyl chlorophyll b as a cofactor.

The protein localises to the cellular thylakoid membrane. Functionally, the antenna complex functions as a light receptor, it captures and delivers excitation energy to photosystems II and I. The Prochlorales pcb genes are not related to higher plant LHCs. This Prochlorococcus marinus (strain SARG / CCMP1375 / SS120) protein is Divinyl chlorophyll a/b light-harvesting protein PcbA (pcbA).